We begin with the raw amino-acid sequence, 250 residues long: Ubiquinone/menaquinone biosynthesis C-methyltransferase UbiE (250 aa).

S-adenosyl-L-methionine is bound by residues Thr-74, Asp-94, 122–123 (DA), and Ser-139.

The protein belongs to the class I-like SAM-binding methyltransferase superfamily. MenG/UbiE family.

It carries out the reaction a 2-demethylmenaquinol + S-adenosyl-L-methionine = a menaquinol + S-adenosyl-L-homocysteine + H(+). It catalyses the reaction a 2-methoxy-6-(all-trans-polyprenyl)benzene-1,4-diol + S-adenosyl-L-methionine = a 5-methoxy-2-methyl-3-(all-trans-polyprenyl)benzene-1,4-diol + S-adenosyl-L-homocysteine + H(+). Its pathway is quinol/quinone metabolism; menaquinone biosynthesis; menaquinol from 1,4-dihydroxy-2-naphthoate: step 2/2. The protein operates within cofactor biosynthesis; ubiquinone biosynthesis. Its function is as follows. Methyltransferase required for the conversion of demethylmenaquinol (DMKH2) to menaquinol (MKH2) and the conversion of 2-polyprenyl-6-methoxy-1,4-benzoquinol (DDMQH2) to 2-polyprenyl-3-methyl-6-methoxy-1,4-benzoquinol (DMQH2). The chain is Ubiquinone/menaquinone biosynthesis C-methyltransferase UbiE from Paracoccus denitrificans (strain Pd 1222).